A 196-amino-acid chain; its full sequence is Xanthine phosphoribosyltransferase (196 aa).

Residues Leu-20 and Asn-27 each contribute to the xanthine site. 5-phospho-alpha-D-ribose 1-diphosphate is bound at residue Ala-128–Ala-132. Lys-156 contributes to the xanthine binding site.

This sequence belongs to the purine/pyrimidine phosphoribosyltransferase family. Xpt subfamily. In terms of assembly, homodimer.

Its subcellular location is the cytoplasm. The enzyme catalyses XMP + diphosphate = xanthine + 5-phospho-alpha-D-ribose 1-diphosphate. Its pathway is purine metabolism; XMP biosynthesis via salvage pathway; XMP from xanthine: step 1/1. Functionally, converts the preformed base xanthine, a product of nucleic acid breakdown, to xanthosine 5'-monophosphate (XMP), so it can be reused for RNA or DNA synthesis. The sequence is that of Xanthine phosphoribosyltransferase from Brevibacillus brevis (strain 47 / JCM 6285 / NBRC 100599).